We begin with the raw amino-acid sequence, 153 residues long: Histone H2B.10 (153 aa).

Basic and acidic residues-rich tracts occupy residues 1–28 (MAPK…EKAP) and 36–53 (EKRL…EGKK). The segment at 1–61 (MAPKAEKKPA…KKAGRKKAKK (61 aa)) is disordered. Lysine 7 and lysine 37 each carry N6-acetyllysine. A Glycyl lysine isopeptide (Lys-Gly) (interchain with G-Cter in ubiquitin) cross-link involves residue lysine 149.

Belongs to the histone H2B family. As to quaternary structure, the nucleosome is a histone octamer containing two molecules each of H2A, H2B, H3 and H4 assembled in one H3-H4 heterotetramer and two H2A-H2B heterodimers. The octamer wraps approximately 147 bp of DNA. In terms of processing, can be acetylated to form H2BK6ac and H2BK33ac. Post-translationally, monoubiquitinated by BRE1 to form H2BK143ub1 and deubiquitinated by UBP26. Required for heterochromatic histone H3 di- and trimethylation at H3K4me. May give a specific tag for epigenetic transcriptional activation.

The protein localises to the nucleus. The protein resides in the chromosome. Core component of nucleosome. Nucleosomes wrap and compact DNA into chromatin, limiting DNA accessibility to the cellular machineries which require DNA as a template. Histones thereby play a central role in transcription regulation, DNA repair, DNA replication and chromosomal stability. DNA accessibility is regulated via a complex set of post-translational modifications of histones, also called histone code, and nucleosome remodeling. This is Histone H2B.10 (H2B.10) from Oryza sativa subsp. indica (Rice).